The primary structure comprises 404 residues: Argininosuccinate synthase (404 aa).

Residues Ala-9–Ser-17 and Ala-36 each bind ATP. Residue Tyr-87 coordinates L-citrulline. Gly-117 lines the ATP pocket. The L-aspartate site is built by Thr-119, Asn-123, and Asp-124. Position 123 (Asn-123) interacts with L-citrulline. Arg-127, Ser-176, and Glu-261 together coordinate L-citrulline.

The protein belongs to the argininosuccinate synthase family. Type 1 subfamily. In terms of assembly, homotetramer.

The protein localises to the cytoplasm. It carries out the reaction L-citrulline + L-aspartate + ATP = 2-(N(omega)-L-arginino)succinate + AMP + diphosphate + H(+). It participates in amino-acid biosynthesis; L-arginine biosynthesis; L-arginine from L-ornithine and carbamoyl phosphate: step 2/3. In Burkholderia pseudomallei (strain K96243), this protein is Argininosuccinate synthase.